Consider the following 75-residue polypeptide: Tautomerase PptA (75 aa).

Pro-2 functions as the Proton acceptor; via imino nitrogen in the catalytic mechanism.

Belongs to the 4-oxalocrotonate tautomerase family. PptA subfamily. Homodimer.

The protein resides in the cytoplasm. This Escherichia coli O127:H6 (strain E2348/69 / EPEC) protein is Tautomerase PptA.